The following is a 328-amino-acid chain: uncharacterized protein (328 aa).

Residues Ala-72–Glu-91 constitute a DNA-binding region (H-T-H motif).

This sequence belongs to the SorC transcriptional regulatory family.

This is an uncharacterized protein from Escherichia coli (strain K12).